The following is a 70-amino-acid chain: MKQGIHPEYKEITATCSCGNVIKTRSTVGKNLNLDVCSNCHPFYTGKQRVVDTGGRVERFNKRFSIPSSK.

Residues Cys-16, Cys-18, Cys-37, and Cys-40 each contribute to the Zn(2+) site.

This sequence belongs to the bacterial ribosomal protein bL31 family. Type A subfamily. In terms of assembly, part of the 50S ribosomal subunit. Requires Zn(2+) as cofactor.

Binds the 23S rRNA. This is Large ribosomal subunit protein bL31 from Histophilus somni (strain 2336) (Haemophilus somnus).